Reading from the N-terminus, the 273-residue chain is Urease accessory protein UreD (273 aa).

Belongs to the UreD family. In terms of assembly, ureD, UreF and UreG form a complex that acts as a GTP-hydrolysis-dependent molecular chaperone, activating the urease apoprotein by helping to assemble the nickel containing metallocenter of UreC. The UreE protein probably delivers the nickel.

Its subcellular location is the cytoplasm. In terms of biological role, required for maturation of urease via the functional incorporation of the urease nickel metallocenter. This Mycolicibacterium gilvum (strain PYR-GCK) (Mycobacterium gilvum (strain PYR-GCK)) protein is Urease accessory protein UreD.